Consider the following 142-residue polypeptide: Coactosin-like protein (142 aa).

A2 carries the N-acetylalanine modification. Residues 2–130 (ATKIDKEACR…EEDFIKSELK (129 aa)) form the ADF-H domain. Residues 66-75 (TGDAMSKRSK) form a flexible and important for F-actin binding region. N6-acetyllysine occurs at positions 102 and 126.

It belongs to the actin-binding proteins ADF family. Coactosin subfamily. In terms of assembly, interacts with 5-lipoxygenase (ALOX5/5LO) in a calcium-independent manner. Binds to F-actin with a stoichiometry of 1:2. Widely expressed with highest levels in placenta, lung, kidney and peripheral blood leukocytes and lower levels in brain, liver and pancreas.

Its subcellular location is the cytoplasm. The protein resides in the cytoskeleton. It localises to the nucleus. In terms of biological role, binds to F-actin in a calcium-independent manner. Has no direct effect on actin depolymerization. Acts as a chaperone for ALOX5 (5LO), influencing both its stability and activity in leukotrienes synthesis. This Homo sapiens (Human) protein is Coactosin-like protein (COTL1).